Here is a 180-residue protein sequence, read N- to C-terminus: MELSIQKIEALIRLSTIVMLVLTACLIGLDSQTKVIFYVQKKASFKDLRALVGLLYITSLAAAYNLLQLCCSSFSASYKGTSLQSYAYLAWLRYILDQAVVYAVFAGNLAALEHSFLVLTGEENFQWLKWCNKYTRFCTQIGGSLLCGFVASLLMFSIASISAFNLFRQYSPTKFMHLKL.

Over 1 to 7 (MELSIQK) the chain is Cytoplasmic. The helical transmembrane segment at 8–28 (IEALIRLSTIVMLVLTACLIG) threads the bilayer. The Extracellular portion of the chain corresponds to 29–49 (LDSQTKVIFYVQKKASFKDLR). Residues 50 to 70 (ALVGLLYITSLAAAYNLLQLC) form a helical membrane-spanning segment. Residues 71–98 (CSSFSASYKGTSLQSYAYLAWLRYILDQ) are Cytoplasmic-facing. The helical transmembrane segment at 99–119 (AVVYAVFAGNLAALEHSFLVL) threads the bilayer. Topologically, residues 120–140 (TGEENFQWLKWCNKYTRFCTQ) are extracellular. The chain crosses the membrane as a helical span at residues 141–161 (IGGSLLCGFVASLLMFSIASI). At 162-180 (SAFNLFRQYSPTKFMHLKL) the chain is on the cytoplasmic side.

It belongs to the Casparian strip membrane proteins (CASP) family. In terms of assembly, homodimer and heterodimers.

The protein resides in the cell membrane. This Gossypium hirsutum (Upland cotton) protein is CASP-like protein XL3 (XL3).